A 541-amino-acid polypeptide reads, in one-letter code: uncharacterized protein (541 aa).

Positions 1 to 22 (MQFKYGALIFSGFLGLSIVLAS) are cleaved as a signal peptide. C23 is lipidated: N-palmitoyl cysteine. A lipid anchor (S-diacylglycerol cysteine) is attached at C23. Disordered regions lie at residues 446–468 (APGQSSQKEGGQQQSNSKDNGNL) and 480–514 (KTKTEVKKTEDTQNQGKKAEGTPNQGKKAEGTENQ). Over residues 448–460 (GQSSQKEGGQQQS) the composition is skewed to low complexity. Residues 480–490 (KTKTEVKKTED) are compositionally biased toward basic and acidic residues.

The protein belongs to the MG185/MG260 family.

It is found in the cell membrane. This is an uncharacterized protein from Mycoplasma pneumoniae (strain ATCC 29342 / M129 / Subtype 1) (Mycoplasmoides pneumoniae).